The sequence spans 720 residues: Iron-sulfur clusters transporter ATM1, mitochondrial (720 aa).

Residues 1–36 constitute a mitochondrion transit peptide; that stretch reads MIMFRSLSVTPVWKAGLSLSHRSIPINSRLSSVRNY. Topologically, residues 37-129 are mitochondrial matrix; the sequence is ISIGCANKTG…PSGDNKVKIR (93 aa). The segment covering 64-77 has biased composition (polar residues); that stretch reads RFNSSSNGNGTDKN. The interval 64–102 is disordered; the sequence is RFNSSSNGNGTDKNASVAPKTEVKKIVPPKPSTNGKSKT. A helical membrane pass occupies residues 130 to 151; the sequence is VLIALALLIGAKLLNVQVPFFF. The region spanning 130–421 is the ABC transmembrane type-1 domain; it reads VLIALALLIG…LGSVYRELKQ (292 aa). Residues 152–175 are Mitochondrial intermembrane-facing; that stretch reads KQTIDSMNIEWGPDVATVLPVAIT. A helical membrane pass occupies residues 176 to 199; sequence MTILSYGAARFGAVMFGELRNAVF. Over 200–248 the chain is Mitochondrial matrix; the sequence is AKVAQNAIRKVSLQTFQHLMKLDLGWHLSRQTGGLTRAMDRGTKGISYV. Residues 249-272 traverse the membrane as a helical segment; it reads LSAMVFHMIPITFEISVVCGILTY. A topological domain (mitochondrial intermembrane) is located at residue Gln273. The helical transmembrane segment at 274-294 threads the bilayer; that stretch reads FGSSFAAMTFVTMLLYSFFTF. Residues 295 to 360 are Mitochondrial matrix-facing; it reads KTTAWRTEFR…SQIKVAQSLA (66 aa). Residues 300-304 and 363-366 each bind glutathione; these read RTEFR and NAGQ. A helical membrane pass occupies residues 361–379; sequence FLNAGQNFIFTSALTAMMY. The Mitochondrial intermembrane segment spans residues 380-394; sequence MGASGVMEGALTVGD. A helical transmembrane segment spans residues 395-416; that stretch reads LVLINQLVFQLSVPLNFLGSVY. Gly413 lines the glutathione pocket. The Mitochondrial matrix portion of the chain corresponds to 417 to 720; sequence RELKQSLIDM…EKEPRTSKKD (304 aa). Positions 456 to 692 constitute an ABC transporter domain; sequence IKFENVTFGY…PNSLYSELWN (237 aa). ATP contacts are provided by residues Tyr465 and 489-500; that span reads GPSGSGKSTILR.

Belongs to the ABC transporter superfamily. ABCB family. Heavy Metal importer (TC 3.A.1.210) subfamily. As to quaternary structure, homodimer.

It is found in the mitochondrion inner membrane. Its function is as follows. Performs an essential function in the generation of cytoplasmic iron-sulfur proteins by mediating the ATP-dependent export of Fe/S cluster precursors synthesized by NFS1 and other mitochondrial proteins. Hydrolyzes ATP. Binds glutathione and may function by transporting a glutathione-conjugated iron-sulfur compound. This chain is Iron-sulfur clusters transporter ATM1, mitochondrial, found in Kluyveromyces lactis (strain ATCC 8585 / CBS 2359 / DSM 70799 / NBRC 1267 / NRRL Y-1140 / WM37) (Yeast).